The chain runs to 223 residues: 7-cyano-7-deazaguanine synthase (223 aa).

8-18 (LSGGLDSATTL) provides a ligand contact to ATP. The Zn(2+) site is built by Cys187, Cys197, Cys200, and Cys203.

The protein belongs to the QueC family. Zn(2+) is required as a cofactor.

The catalysed reaction is 7-carboxy-7-deazaguanine + NH4(+) + ATP = 7-cyano-7-deazaguanine + ADP + phosphate + H2O + H(+). Its pathway is purine metabolism; 7-cyano-7-deazaguanine biosynthesis. Catalyzes the ATP-dependent conversion of 7-carboxy-7-deazaguanine (CDG) to 7-cyano-7-deazaguanine (preQ(0)). The sequence is that of 7-cyano-7-deazaguanine synthase from Methylococcus capsulatus (strain ATCC 33009 / NCIMB 11132 / Bath).